Reading from the N-terminus, the 393-residue chain is Putative serpin-Z6A (393 aa).

Positions 336-360 are RCL; that stretch reads GTEAAAATAVLMEGAARYAPPPPPR.

It belongs to the serpin family.

In terms of biological role, probable serine protease inhibitor. This is Putative serpin-Z6A from Oryza sativa subsp. japonica (Rice).